Consider the following 286-residue polypeptide: Pyridoxal kinase PdxY (286 aa).

Substrate contacts are provided by residues serine 9 and 44 to 45; that span reads TQ. Positions 111, 148, and 181 each coordinate ATP. Position 222 (aspartate 222) interacts with substrate.

The protein belongs to the pyridoxine kinase family. PdxY subfamily. As to quaternary structure, homodimer. It depends on Mg(2+) as a cofactor.

The enzyme catalyses pyridoxal + ATP = pyridoxal 5'-phosphate + ADP + H(+). Its pathway is cofactor metabolism; pyridoxal 5'-phosphate salvage; pyridoxal 5'-phosphate from pyridoxal: step 1/1. Pyridoxal kinase involved in the salvage pathway of pyridoxal 5'-phosphate (PLP). Catalyzes the phosphorylation of pyridoxal to PLP. The polypeptide is Pyridoxal kinase PdxY (Actinobacillus pleuropneumoniae serotype 5b (strain L20)).